The chain runs to 381 residues: MPFGNTHNKHKLNFKAEEEYPDLSKHNNHMAKALTLEIYKKLRDKETPSGFTLDDVIQTGVDNPGHPFIMTVGCVAGDEESYTVFKDLFDPIIQDRHGGFKPTDKHKTDLNHENLKGGDDLDPNYVLSSRVRTGRSIKGYALPPHCSRGERRAVEKLSVEALNSLTGEFKGKYYPLKSMTEQEQQQLIDDHFLFDKPVSPLLLASGMARDWPDARGIWHNDNKSFLVWVNEEDHLRVISMEKGGNMKEVFRRFCVGLQKIEEIFKKAGHPFMWNEHLGYVLTCPSNLGTGLRGGVHVKLAHLSKHPKFEEILTRLRLQKRGTGGVDTAAVGSVFDVSNADRLGSSEVEQVQLVVDGVKLMVEMEKKLEKGQSIDDMIPAQK.

The 88-residue stretch at 11-98 (KLNFKAEEEY…FDPIIQDRHG (88 aa)) folds into the Phosphagen kinase N-terminal domain. A Phosphagen kinase C-terminal domain is found at 125–367 (YVLSSRVRTG…KLMVEMEKKL (243 aa)). 128–132 (SSRVR) serves as a coordination point for ATP. S164 carries the phosphoserine modification. Position 166 is a phosphothreonine (T166). The residue at position 178 (S178) is a Phosphoserine. Residue T180 is modified to Phosphothreonine. H191 is a binding site for ATP. S199 bears the Phosphoserine mark. ATP contacts are provided by R236 and R292. Residues T313 and T322 each carry the phosphothreonine modification. Residues 320–325 (RGTGGV) and D335 contribute to the ATP site. Phosphoserine is present on S372.

This sequence belongs to the ATP:guanido phosphotransferase family. In terms of assembly, dimer of identical or non-identical chains, which can be either B (brain type) or M (muscle type). With MM being the major form in skeletal muscle and myocardium, MB existing in myocardium, and BB existing in many tissues, especially brain.

Its subcellular location is the cytoplasm. It carries out the reaction creatine + ATP = N-phosphocreatine + ADP + H(+). Its function is as follows. Reversibly catalyzes the transfer of phosphate between ATP and various phosphogens (e.g. creatine phosphate). Creatine kinase isoenzymes play a central role in energy transduction in tissues with large, fluctuating energy demands, such as skeletal muscle, heart, brain and spermatozoa. This chain is Creatine kinase M-type (CKM), found in Bos taurus (Bovine).